Reading from the N-terminus, the 243-residue chain is MARLWGALSLWPLWAAVPWGGAAAVGVRACSSTAAPDGVEGPALRRSYWRHLRRLVLGPPEPPFSHVCQVGDPVLRGVAAPVERAQLGGPELQRLTQRLVQVMRRRRCVGLSAPQLGVPRQVLALELPEALCRECPPRQRALRQMEPFPLRVFVNPSLRVLDSRLVTFPEGCESVAGFLACVPRFQAVQISGLDPNGEQVVWQASGWAARIIQHEMDHLQGCLFIDKMDSRTFTNVYWMKVND.

The transit peptide at 1 to 39 (MARLWGALSLWPLWAAVPWGGAAAVGVRACSSTAAPDGV) directs the protein to the mitochondrion. Substrate is bound by residues Gly71, Pro169, and Gly171. A hydrophobic dimerization interface region spans residues 165–175 (LVTFPEGCESV). Co(2+) contacts are provided by Cys172 and His214. The active site involves Glu215. A Co(2+)-binding site is contributed by His218.

The protein belongs to the polypeptide deformylase family. Homodimer. Requires Co(2+) as cofactor. In terms of tissue distribution, ubiquitous.

The protein localises to the mitochondrion. It carries out the reaction N-terminal N-formyl-L-methionyl-[peptide] + H2O = N-terminal L-methionyl-[peptide] + formate. Functionally, removes the formyl group from the N-terminal Met of newly synthesized proteins. The polypeptide is Peptide deformylase, mitochondrial (Homo sapiens (Human)).